Consider the following 144-residue polypeptide: Large ribosomal subunit protein uL16 (144 aa).

A compositionally biased stretch (basic residues) spans 1–17 (MLQPKKTKFRRQQKGRA). A disordered region spans residues 1-22 (MLQPKKTKFRRQQKGRAKGNAQ).

It belongs to the universal ribosomal protein uL16 family. Part of the 50S ribosomal subunit.

Its function is as follows. Binds 23S rRNA and is also seen to make contacts with the A and possibly P site tRNAs. The sequence is that of Large ribosomal subunit protein uL16 from Bacteroides thetaiotaomicron (strain ATCC 29148 / DSM 2079 / JCM 5827 / CCUG 10774 / NCTC 10582 / VPI-5482 / E50).